A 61-amino-acid polypeptide reads, in one-letter code: Lens epithelial cell protein LEP503 (61 aa).

Preferentially expressed in the lens epithelial cells.

The sequence is that of Lens epithelial cell protein LEP503 (Lenep) from Rattus norvegicus (Rat).